The sequence spans 367 residues: 2-aminoethylphosphonate--pyruvate transaminase (367 aa).

Lys-193 carries the post-translational modification N6-(pyridoxal phosphate)lysine.

It belongs to the class-V pyridoxal-phosphate-dependent aminotransferase family. PhnW subfamily. Homodimer. Pyridoxal 5'-phosphate is required as a cofactor.

It carries out the reaction (2-aminoethyl)phosphonate + pyruvate = phosphonoacetaldehyde + L-alanine. Involved in phosphonate degradation. The protein is 2-aminoethylphosphonate--pyruvate transaminase of Vibrio vulnificus (strain CMCP6).